The sequence spans 584 residues: Negative regulator of RAS-cAMP pathway (584 aa).

T25 is subject to Phosphothreonine. Disordered regions lie at residues 95–167 (PIKP…STTS), 209–279 (PLQS…SKTS), 291–320 (SEDE…DDYN), 343–366 (NLDS…HDPV), and 381–432 (SNSN…SLKT). Polar residues-rich tracts occupy residues 114 to 127 (PPTT…TRPM), 229 to 254 (CIDN…SFPQ), and 267 to 278 (NDQNGQLSLSKT). Residues S247 and S276 each carry the phosphoserine modification. Residues 307–320 (FYADEDDEEYDDYN) are compositionally biased toward acidic residues. Over residues 343-363 (NLDSTKSSVSSANTINSNTSH) the composition is skewed to polar residues. A compositionally biased stretch (low complexity) spans 381–392 (SNSNNHNTAHSE). The segment covering 398 to 432 (VSPTPQSSHSNIGPQPQQNPPSANGIKQQKPSLKT) has biased composition (polar residues). A Phosphoserine modification is found at S442. Residue S518 is modified to Phosphoserine; by PKA. A disordered region spans residues 551 to 584 (DNTSIANSNGNGNDDTSNQRTEALGRKTSNGGRI). Over residues 557–568 (NSNGNGNDDTSN) the composition is skewed to low complexity.

Its subcellular location is the nucleus. In terms of biological role, negative regulator of Ras-cAMP pathway. Involved in transcriptional regulation of galactose-inducible genes. The sequence is that of Negative regulator of RAS-cAMP pathway (MKS1) from Saccharomyces cerevisiae (strain ATCC 204508 / S288c) (Baker's yeast).